The primary structure comprises 947 residues: Protein translocase subunit SecA (947 aa).

ATP-binding positions include Q85, G103–T107, and D514. The segment at A864–K947 is disordered. Positions P884 to H900 are enriched in basic and acidic residues. Residues E934–K947 are compositionally biased toward basic residues.

This sequence belongs to the SecA family. In terms of assembly, monomer and homodimer. Part of the essential Sec protein translocation apparatus which comprises SecA, SecYEG and auxiliary proteins SecDF. Other proteins may also be involved.

Its subcellular location is the cell membrane. It localises to the cytoplasm. It catalyses the reaction ATP + H2O + cellular proteinSide 1 = ADP + phosphate + cellular proteinSide 2.. Functionally, part of the Sec protein translocase complex. Interacts with the SecYEG preprotein conducting channel. Has a central role in coupling the hydrolysis of ATP to the transfer of proteins into and across the cell membrane, serving as an ATP-driven molecular motor driving the stepwise translocation of polypeptide chains across the membrane. The chain is Protein translocase subunit SecA from Streptomyces lividans.